Reading from the N-terminus, the 105-residue chain is Transcriptional regulator SutA (105 aa).

The span at methionine 1–glutamate 37 shows a compositional bias: acidic residues. The tract at residues methionine 1–isoleucine 105 is disordered. 2 stretches are compositionally biased toward basic and acidic residues: residues alanine 59 to glutamate 83 and proline 92 to isoleucine 105.

As to quaternary structure, interacts with RNA polymerase.

Functionally, causes widespread changes in gene expression, and plays a direct role in the regulation of genes encoding ribosomal components. Associates with chromosomal DNA through interaction with RNA polymerase. Contributes to biofilm formation and secondary metabolite production. Important during transitions to and from the survival state. This Pseudomonas aeruginosa (strain UCBPP-PA14) protein is Transcriptional regulator SutA.